The primary structure comprises 159 residues: Phosphopantetheine adenylyltransferase (159 aa).

A substrate-binding site is contributed by Thr-9. ATP contacts are provided by residues 9 to 10 (TF) and His-17. The substrate site is built by Lys-41, Leu-73, and Arg-87. ATP is bound by residues 88 to 90 (GLR), Glu-98, and 123 to 129 (YSFISST).

This sequence belongs to the bacterial CoaD family. Homohexamer. Mg(2+) serves as cofactor.

It is found in the cytoplasm. The catalysed reaction is (R)-4'-phosphopantetheine + ATP + H(+) = 3'-dephospho-CoA + diphosphate. It functions in the pathway cofactor biosynthesis; coenzyme A biosynthesis; CoA from (R)-pantothenate: step 4/5. Reversibly transfers an adenylyl group from ATP to 4'-phosphopantetheine, yielding dephospho-CoA (dPCoA) and pyrophosphate. In Pseudomonas putida (strain GB-1), this protein is Phosphopantetheine adenylyltransferase.